Consider the following 64-residue polypeptide: Alpha-conotoxin Lt14.1 (64 aa).

An N-terminal signal peptide occupies residues 1–20 (MKLSVMFIVFLMLTMPMTCA). A propeptide spanning residues 21–50 (GISRSATNGGEADVRAHDKAANLMALLQER) is cleaved from the precursor. 2 disulfide bridges follow: C52–C60 and C56–C63. C63 is subject to Cysteine amide.

It belongs to the conotoxin L superfamily. May contain a 4-hydroxyproline. Expressed by the venom duct.

The protein resides in the secreted. In terms of biological role, alpha-conotoxins act on postsynaptic membranes, they bind to the nicotinic acetylcholine receptors (nAChR) and thus inhibit them. This synthetic peptide displays analgesic activity in a hot plate assay. Analgesia is also observed against second phase pain in formalin-induced inflammatory pain model, and in a rat model of mechanically-induced pain. Effects downstream of nAChR are inhibition of calcium influx, inhibition of ERK1/2 phosphorylation and inhibition of c-fos/NOS expression. Genes associated with drug dependence are not up-regulated by this toxin. Treatment with this toxin reversed morphine withdrawal symptoms in mice. The protein is Alpha-conotoxin Lt14.1 of Conus litteratus (Lettered cone).